The following is a 629-amino-acid chain: tRNA uridine 5-carboxymethylaminomethyl modification enzyme MnmG (629 aa).

13–18 contacts FAD; that stretch reads GGGHAG. 273–287 provides a ligand contact to NAD(+); the sequence is GPRYCPSIEDKIVRF.

The protein belongs to the MnmG family. Homodimer. Heterotetramer of two MnmE and two MnmG subunits. FAD serves as cofactor.

Its subcellular location is the cytoplasm. In terms of biological role, NAD-binding protein involved in the addition of a carboxymethylaminomethyl (cmnm) group at the wobble position (U34) of certain tRNAs, forming tRNA-cmnm(5)s(2)U34. This is tRNA uridine 5-carboxymethylaminomethyl modification enzyme MnmG from Pseudoalteromonas translucida (strain TAC 125).